The primary structure comprises 316 residues: CD276 antigen (316 aa).

The first 28 residues, 1–28 (MLRGWGGPSVGVCVRTALGVLCLCLTGA), serve as a signal peptide directing secretion. One can recognise an Ig-like V-type domain in the interval 29-139 (VEVQVSEDPV…DSAAVSLQVA (111 aa)). Topologically, residues 29–248 (VEVQVSEDPV…GQPLTFPPEA (220 aa)) are extracellular. 3 N-linked (GlcNAc...) asparagine glycosylation sites follow: Asn-104, Asn-189, and Asn-215. An Ig-like C2-type domain is found at 145-238 (PSMTLEPNKD…QDAHGSVTIT (94 aa)). Cysteines 165 and 220 form a disulfide. A helical membrane pass occupies residues 249-269 (LWVTVGLSVCLVVLLVALAFV). The Cytoplasmic portion of the chain corresponds to 270–316 (CWRKIKQSCEEENAGAEDQDGDGEGSKTALRPLKPSENKEDDGQEIA). Acidic residues predominate over residues 280-292 (EENAGAEDQDGDG). The interval 280–316 (EENAGAEDQDGDGEGSKTALRPLKPSENKEDDGQEIA) is disordered.

This sequence belongs to the immunoglobulin superfamily. BTN/MOG family. Interacts with TREML2 and this interaction enhances T-cell activation. Ubiquitous.

Its subcellular location is the membrane. Functionally, modulates T-cell-mediated immune responses and the development of acute and chronic transplant rejection. Plays a positive regulatory role in bone formation and has a dual role in the bone-immune interface. Induces antitumor immunity as it activates both acquired and innate immunity leading to natural killer cell and CD8 T-cell dependent killing of tumor cells. The chain is CD276 antigen (Cd276) from Mus musculus (Mouse).